The sequence spans 420 residues: UDP-N-acetyl-D-mannosamine dehydrogenase (420 aa).

Residues tyrosine 13, isoleucine 14, aspartate 33, threonine 85, and threonine 126 each contribute to the NAD(+) site. Positions 160, 161, 212, 216, 219, 250, 252, and 263 each coordinate UDP-N-acetyl-alpha-D-mannosaminouronate. Lysine 212 serves as the catalytic Proton donor/acceptor. Cysteine 266 acts as the Nucleophile in catalysis. UDP-N-acetyl-alpha-D-mannosaminouronate is bound by residues phenylalanine 330 and lysine 331. Arginine 338 contributes to the NAD(+) binding site. Lysine 416 lines the UDP-N-acetyl-alpha-D-mannosaminouronate pocket.

Belongs to the UDP-glucose/GDP-mannose dehydrogenase family. WecC subfamily. In terms of assembly, homodimer.

The catalysed reaction is UDP-N-acetyl-alpha-D-mannosamine + 2 NAD(+) + H2O = UDP-N-acetyl-alpha-D-mannosaminouronate + 2 NADH + 3 H(+). It participates in bacterial outer membrane biogenesis; enterobacterial common antigen biosynthesis. Catalyzes the four-electron oxidation of UDP-N-acetyl-D-mannosamine (UDP-ManNAc), reducing NAD(+) and releasing UDP-N-acetylmannosaminuronic acid (UDP-ManNAcA). The protein is UDP-N-acetyl-D-mannosamine dehydrogenase of Shigella flexneri.